Consider the following 295-residue polypeptide: Acetaldehyde dehydrogenase 2 (295 aa).

17-20 provides a ligand contact to NAD(+); the sequence is TGNI. Catalysis depends on C132, which acts as the Acyl-thioester intermediate. Residues 164–172 and N275 each bind NAD(+); that span reads SVGPASRAN.

This sequence belongs to the acetaldehyde dehydrogenase family.

The catalysed reaction is acetaldehyde + NAD(+) + CoA = acetyl-CoA + NADH + H(+). The protein is Acetaldehyde dehydrogenase 2 of Salinispora arenicola (strain CNS-205).